The following is a 459-amino-acid chain: Glycosyl hydrolase family 109 protein (459 aa).

Positions 1 to 31 form a signal peptide, tat-type signal; the sequence is MHNIHRRHFLKAAGAVTAGLITANITASTHA. Residues 64 to 65, D86, 135 to 138, 155 to 156, and N184 each bind NAD(+); these read ER, WEWH, and EV. Residues Y213, R232, 244 to 247, and Y326 contribute to the substrate site; that span reads YPTH. Position 244 (Y244) interacts with NAD(+).

The protein belongs to the Gfo/Idh/MocA family. Glycosyl hydrolase 109 subfamily. Requires NAD(+) as cofactor. In terms of processing, predicted to be exported by the Tat system. The position of the signal peptide cleavage has not been experimentally proven.

In terms of biological role, glycosidase. This Shewanella sp. (strain W3-18-1) protein is Glycosyl hydrolase family 109 protein.